The sequence spans 343 residues: C5a anaphylatoxin chemotactic receptor 2 (343 aa).

Over 1–44 (MLNDTTSKDYEYEYDQEQYSDLLNVPVDCPAGNCFSNDAYLIVL) the chain is Extracellular. Residue Asn-3 is glycosylated (N-linked (GlcNAc...) asparagine). The helical transmembrane segment at 45 to 67 (LGLYSVIFLVGVPGNTLLAWVTW) threads the bilayer. At 68–78 (KESRHRLGASW) the chain is on the cytoplasmic side. The helical transmembrane segment at 79-101 (FLHLTMADLLCCVSLPFLAVPIA) threads the bilayer. The Extracellular segment spans residues 102–120 (QKGHWPYGTAGCWLLSSIT). A disulfide bridge links Cys-113 with Cys-192. A helical membrane pass occupies residues 121-143 (VLSMYASVLLLTGLSGDLFLLAF). Topologically, residues 144 to 155 (RPSWKNADQRTC) are cytoplasmic. The helical transmembrane segment at 156–178 (GVRVVQVSSWMLALLLTVPGAVY) threads the bilayer. Residues 179–208 (RKLLQEHYPPRLVCGTNYGGSVTAEVTITT) lie on the Extracellular side of the membrane. A helical membrane pass occupies residues 209–231 (VRFLFGFLVPLVFMASCHGILQR). Residues 232–243 (QMARRHWPLGTA) are Cytoplasmic-facing. Residues 244–266 (VVVGFFICWTPFHLLRVIIAVAS) traverse the membrane as a helical segment. At 267 to 280 (SHSPLLAWALEAEP) the chain is on the extracellular side. Residues 281–300 (LVTGLALAHSALNPIMFLYF) traverse the membrane as a helical segment. Residues 301–343 (GRKQLCKSLQAACHWALRDLQDEEESAVTKVSTSQEMVSEMPV) are Cytoplasmic-facing. Ser-326 is subject to Phosphoserine.

This sequence belongs to the G-protein coupled receptor 1 family. As to quaternary structure, interacts with C3 (the anaphylatoxin peptide C3a and the adipogenic hormone ASP); the interaction occurs with higher affinity for ASP, enhancing the phosphorylation and activation of GPR77, recruitment of ARRB2 to the cell surface and endocytosis of GRP77.

It is found in the cell membrane. In terms of biological role, receptor for the chemotactic and inflammatory C3a, C4a and C5a anaphylatoxin peptides and also for their dearginated forms ASP/C3adesArg, C4adesArg and C5adesArg respectively. Couples weakly to G(i)-mediated signaling pathways. The sequence is that of C5a anaphylatoxin chemotactic receptor 2 (C5ar2) from Rattus norvegicus (Rat).